A 345-amino-acid polypeptide reads, in one-letter code: N-glycosylase/DNA lyase (345 aa).

The DNA site is built by Asn149, Arg154, and Arg204. Lys249 functions as the Schiff-base intermediate with DNA in the catalytic mechanism. Residues Pro266 and Asp268 each coordinate 8-oxoguanine. Residues His270 and Gln287 each contribute to the DNA site. Positions 315 and 319 each coordinate 8-oxoguanine.

Belongs to the type-1 OGG1 family. Highest expression in testis.

Its subcellular location is the nucleus. The protein resides in the nucleoplasm. It localises to the nucleus speckle. The protein localises to the nucleus matrix. The enzyme catalyses 2'-deoxyribonucleotide-(2'-deoxyribose 5'-phosphate)-2'-deoxyribonucleotide-DNA = a 3'-end 2'-deoxyribonucleotide-(2,3-dehydro-2,3-deoxyribose 5'-phosphate)-DNA + a 5'-end 5'-phospho-2'-deoxyribonucleoside-DNA + H(+). Functionally, DNA repair enzyme that incises DNA at 8-oxoG residues. Excises 7,8-dihydro-8-oxoguanine and 2,6-diamino-4-hydroxy-5-N-methylformamidopyrimidine (FAPY) from damaged DNA. Has a beta-lyase activity that nicks DNA 3' to the lesion. The chain is N-glycosylase/DNA lyase (Ogg1) from Mus musculus (Mouse).